We begin with the raw amino-acid sequence, 314 residues long: Three-prime repair exonuclease 1 (314 aa).

Residues Asp18 and Glu20 each coordinate Mg(2+). Position 20–21 (20–21) interacts with substrate; sequence EA. Ser78 carries the post-translational modification Phosphoserine. Tyr129 contributes to the substrate binding site. Ser167 bears the Phosphoserine mark. Residue His195 is the Proton donor/acceptor of the active site. Asp200 contributes to the Mg(2+) binding site. Asp200 contributes to the substrate binding site. Positions 236-314 are necessary for endoplasmic reticulum localization; that stretch reads TASARTKPRP…YGLSLATPGE (79 aa). The segment at 240-278 is disordered; sequence RTKPRPSAVTTTAHLATTRNTSPSLGESRGTKDLPPVKD. The interval 243–314 is interaction with UBQLN1; sequence PRPSAVTTTA…YGLSLATPGE (72 aa). A compositionally biased stretch (low complexity) spans 247-260; it reads AVTTTAHLATTRNT. Ser261 carries the post-translational modification Phosphoserine. Positions 281-314 are necessary for cytoplasmic retention; the sequence is ALSREGLLAPLGLLAILTLAVATLYGLSLATPGE.

Belongs to the exonuclease superfamily. TREX family. In terms of assembly, homodimer. Interacts (via proline-rich region) with TCERG1/CA150 (via the second WW domain). Component of the SET complex, composed of at least ANP32A, APEX1, HMGB2, NME1, SET and TREX1. Within this complex, directly interacts with SET; this interaction does not result in TREX1 inhibition. Also interacts with NME1, but only following translocation to the nucleus. Directly interacts with UBQLN1 (via ubiquitin-like domain); the interaction may control TREX1 subcellular location. The cofactor is Mg(2+). Post-translationally, ubiquitinated, but not targeted to proteasomal degradation. Ubiquitination may be important for interaction with UBQLN1. As to expression, detected in thymus, spleen, liver, brain, heart, small intestine and colon.

The protein localises to the nucleus. The protein resides in the cytoplasm. It localises to the cytosol. Its subcellular location is the endoplasmic reticulum membrane. The catalysed reaction is Exonucleolytic cleavage in the 3'- to 5'-direction to yield nucleoside 5'-phosphates.. Functionally, major cellular 3'-to-5' DNA exonuclease which digests single-stranded DNA (ssDNA) and double-stranded DNA (dsDNA) with mismatched 3' termini. Prevents cell-intrinsic initiation of autoimmunity. Acts by metabolizing DNA fragments from endogenous retroelements, including L1, LTR and SINE elements. Plays a key role in degradation of DNA fragments at cytosolic micronuclei arising from genome instability: its association with the endoplasmic reticulum membrane directs TREX1 to ruptured micronuclei, leading to micronuclear DNA degradation. Micronuclear DNA degradation is required to limit CGAS activation and subsequent inflammation. Unless degraded, these DNA fragments accumulate in the cytosol and activate the cGAS-STING innate immune signaling, leading to the production of type I interferon. Prevents chronic ATM-dependent checkpoint activation, by processing ssDNA polynucleotide species arising from the processing of aberrant DNA replication intermediates. Inefficiently degrades oxidized DNA, such as that generated upon antimicrobial reactive oxygen production or upon absorption of UV light. During GZMA-mediated cell death, contributes to DNA damage in concert with NME1. NME1 nicks one strand of DNA and TREX1 removes bases from the free 3' end to enhance DNA damage and prevent DNA end reannealing and rapid repair. The chain is Three-prime repair exonuclease 1 from Homo sapiens (Human).